Reading from the N-terminus, the 487-residue chain is Fibroblast growth factor receptor-like 1 (487 aa).

The first 18 residues, 1 to 18 (MGLQLALLLAGIVALSDS), serve as a signal peptide directing secretion. Residues 19 to 371 (ARGPPRIADK…PSSVSSLPWP (353 aa)) lie on the Extracellular side of the membrane. Residues 23 to 109 (PRIADKVIHR…GSTNVNYTLI (87 aa)) enclose the Ig-like C2-type 1 domain. A disulfide bridge connects residues cysteine 45 and cysteine 93. The N-linked (GlcNAc...) asparagine glycan is linked to asparagine 105. The span at 115 to 125 (SSGKNSQTPEG) shows a compositional bias: polar residues. A disordered region spans residues 115-147 (SSGKNSQTPEGSNGEYEDHSGKQWAQPRFTQPA). Ig-like C2-type domains follow at residues 141–231 (PRFT…YKVE) and 240–348 (PILT…AFLT). Cysteine 166 and cysteine 215 are oxidised to a cystine. N-linked (GlcNAc...) asparagine glycosylation is found at asparagine 225, asparagine 249, and asparagine 287. Cysteine 262 and cysteine 332 form a disulfide bridge. The chain crosses the membrane as a helical span at residues 372-392 (VIIGIPAGAVFIFGTILLWLC). Over 393 to 487 (QTKKKPCSPP…HQHQHIQYQC (95 aa)) the chain is Cytoplasmic.

Interacts with heparin and FGF2. In terms of tissue distribution, expressed in cartilaginous structures.

The protein localises to the cell membrane. Its function is as follows. Has a negative effect on cell proliferation. In Gallus gallus (Chicken), this protein is Fibroblast growth factor receptor-like 1 (FGFRL1).